Consider the following 191-residue polypeptide: Adenylate kinase (191 aa).

10-15 (GAGKGT) lines the ATP pocket. The tract at residues 30-59 (STGDIFRANVTEGTPLGVEAKRYMDAGEYV) is NMP. Residues threonine 31, arginine 36, 57 to 59 (EYV), 85 to 88 (GYPR), and glutamine 92 contribute to the AMP site. The interval 126 to 136 (QRAQVEGRADD) is LID. Arginine 127 serves as a coordination point for ATP. Positions 133 and 144 each coordinate AMP. Glycine 172 lines the ATP pocket.

Belongs to the adenylate kinase family. As to quaternary structure, monomer.

It localises to the cytoplasm. The enzyme catalyses AMP + ATP = 2 ADP. The protein operates within purine metabolism; AMP biosynthesis via salvage pathway; AMP from ADP: step 1/1. In terms of biological role, catalyzes the reversible transfer of the terminal phosphate group between ATP and AMP. Plays an important role in cellular energy homeostasis and in adenine nucleotide metabolism. The sequence is that of Adenylate kinase from Nocardioides sp. (strain ATCC BAA-499 / JS614).